Here is a 419-residue protein sequence, read N- to C-terminus: MIDLKVLRENPDAVRASQLARGEDPGLVDALADADTARRAAISAADNLRAEQKSASRLVGKASPEERPALLAAAKELADKVRAAESAQAEAEKAYSAAHMAISNVIIDGVPAGGEDDFVVLDTVGEPTALTDPKDHLELGESLGLIDMERGAKVSGSRFYFLTGFGALLQLGLFQLAVRTATENGFTLVIPPVLVRPEIMSGTGFLGAHADEVYRVEADDLYLVGTSEVPLAGYHSGEILDLSEGPKRYAGWSSCFRREAGSYGKDTRGIIRVHQFDKVEGFVYCRPEEAEAEHDRLLGWQRQMLGLIEVPYRVIDIAAGDLGSSAARKFDCEAWVPTQQTYRELTSTSNCTTFQARRLGVRYRDENGKPQTAATLNGTLATTRWLVAILENHQQPDGSVRIPEALVPYVGTEVLTPKN.

226–228 (TSE) contacts L-serine. Residues 257 to 259 (RRE) and V273 contribute to the ATP site. E280 serves as a coordination point for L-serine. 344 to 347 (ELTS) provides a ligand contact to ATP. T379 contacts L-serine.

It belongs to the class-II aminoacyl-tRNA synthetase family. Type-1 seryl-tRNA synthetase subfamily. Homodimer. The tRNA molecule binds across the dimer.

Its subcellular location is the cytoplasm. The enzyme catalyses tRNA(Ser) + L-serine + ATP = L-seryl-tRNA(Ser) + AMP + diphosphate + H(+). It carries out the reaction tRNA(Sec) + L-serine + ATP = L-seryl-tRNA(Sec) + AMP + diphosphate + H(+). It functions in the pathway aminoacyl-tRNA biosynthesis; selenocysteinyl-tRNA(Sec) biosynthesis; L-seryl-tRNA(Sec) from L-serine and tRNA(Sec): step 1/1. Catalyzes the attachment of serine to tRNA(Ser). Is also able to aminoacylate tRNA(Sec) with serine, to form the misacylated tRNA L-seryl-tRNA(Sec), which will be further converted into selenocysteinyl-tRNA(Sec). This is Serine--tRNA ligase from Mycolicibacterium vanbaalenii (strain DSM 7251 / JCM 13017 / BCRC 16820 / KCTC 9966 / NRRL B-24157 / PYR-1) (Mycobacterium vanbaalenii).